A 259-amino-acid polypeptide reads, in one-letter code: Protein unc-50 homolog (259 aa).

Methionine 1 is subject to N-acetylmethionine. Over 1–82 (MLPSTSLSSS…TKDQWARDDP (82 aa)) the chain is Cytoplasmic. Residue serine 6 is modified to Phosphoserine. The chain crosses the membrane as a helical span at residues 83-103 (AFLVLLSIWLCVSTIGFGFVL). Over 104 to 112 (DMGFFETIK) the chain is Lumenal. A helical transmembrane segment spans residues 113–133 (LLLWVVFIDCVGVGLLISTLM). Topologically, residues 134–163 (WFVSNKYLVKRQSRDYDVEWGYAFDVHLNA) are cytoplasmic. The chain crosses the membrane as a helical span at residues 164–184 (FYPLLVILHFIQLFFINHVIL). Topologically, residues 185 to 187 (TDT) are lumenal. The chain crosses the membrane as a helical span at residues 188 to 208 (FIGYLVGNTLWLIAVGYYIYV). Topologically, residues 209 to 222 (TFLGYSALPFLKNT) are cytoplasmic. The helical transmembrane segment at 223–243 (VILLYPFAPLMVLYGLSLALG) threads the bilayer. Over 244–259 (WNFTHTLCSFYKYRVK) the chain is Lumenal.

This sequence belongs to the unc-50 family. Highly expressed in periodontal ligament and bone marrow, but not in gingival fibroblasts.

The protein localises to the nucleus inner membrane. The protein resides in the golgi apparatus membrane. Involved in the cell surface expression of neuronal nicotinic receptors. Binds RNA. This is Protein unc-50 homolog (Unc50) from Mus musculus (Mouse).